A 973-amino-acid polypeptide reads, in one-letter code: Translation initiation factor IF-2 (973 aa).

Residues 97–135 (GHIDLDGGQHKKQQEEPKAKEEPKVKEEPKVKEEPKVKE) show a composition bias toward basic and acidic residues. Disordered regions lie at residues 97–343 (GHID…EDVQ) and 353–372 (LTNK…DKRD). Residues 136–155 (APAAPAAQAPVKPAQPAQAP) show a composition bias toward low complexity. Basic and acidic residues-rich tracts occupy residues 156 to 175 (TEKK…KTVE), 183 to 204 (PKVE…DDNL), 212 to 224 (LESK…KIDL), and 237 to 250 (TKEE…EKQK). The span at 252-266 (NNNRPGNNSNGPGAP) shows a compositional bias: low complexity. Basic and acidic residues-rich tracts occupy residues 315–326 (PNRDDRPNNDRK) and 333–343 (VKAEVSEEDVQ). Residues 472–642 (ARPPIVTVMG…LLEADLLDLK (171 aa)) form the tr-type G domain. The interval 481–488 (GHVDHGKT) is G1. 481–488 (GHVDHGKT) is a GTP binding site. The interval 506 to 510 (GITQH) is G2. The tract at residues 528 to 531 (DTPG) is G3. Residues 528-532 (DTPGH) and 582-585 (NKID) each bind GTP. The segment at 582 to 585 (NKID) is G4. Positions 618–620 (SAK) are G5.

Belongs to the TRAFAC class translation factor GTPase superfamily. Classic translation factor GTPase family. IF-2 subfamily.

Its subcellular location is the cytoplasm. Its function is as follows. One of the essential components for the initiation of protein synthesis. Protects formylmethionyl-tRNA from spontaneous hydrolysis and promotes its binding to the 30S ribosomal subunits. Also involved in the hydrolysis of GTP during the formation of the 70S ribosomal complex. The polypeptide is Translation initiation factor IF-2 (Parabacteroides distasonis (strain ATCC 8503 / DSM 20701 / CIP 104284 / JCM 5825 / NCTC 11152)).